Here is a 458-residue protein sequence, read N- to C-terminus: Zinc finger protein 239 (458 aa).

Lysine 108 is covalently cross-linked (Glycyl lysine isopeptide (Lys-Gly) (interchain with G-Cter in SUMO2)). Position 191 is a phosphoserine (serine 191). 9 consecutive C2H2-type zinc fingers follow at residues 207–229 (YECSQCGKNFSQSSELLLHQRDH), 235–257 (YKCEQCGKGFTRSSSLLIHQAVH), 263–285 (YKCDKCGKGFTRSSSLLIHHAVH), 291–313 (YKCDKCGKGFSQSSKLHIHQRVH), 319–341 (YECEECGMSFSQRSNLHIHQRVH), 347–369 (YKCGECGKGFSQSSNLHIHRCIH), 375–397 (YQCYECGKGFSQSSDLRIHLRVH), 403–425 (YHCGKCGKGFSQSSKLLIHQRVH), and 431–453 (YECSKCGKGFSQSSNLHIHQRVH).

The protein belongs to the krueppel C2H2-type zinc-finger protein family.

Its subcellular location is the nucleus. May be involved in transcriptional regulation. This is Zinc finger protein 239 (ZNF239) from Homo sapiens (Human).